Here is a 198-residue protein sequence, read N- to C-terminus: Ribonuclease HII (198 aa).

Positions 10–198 constitute an RNase H type-2 domain; it reads QLVAGVDEVG…PVKRALGLAS (189 aa). Positions 16, 17, and 108 each coordinate a divalent metal cation.

It belongs to the RNase HII family. It depends on Mn(2+) as a cofactor. The cofactor is Mg(2+).

It localises to the cytoplasm. It catalyses the reaction Endonucleolytic cleavage to 5'-phosphomonoester.. Functionally, endonuclease that specifically degrades the RNA of RNA-DNA hybrids. In Shigella boydii serotype 18 (strain CDC 3083-94 / BS512), this protein is Ribonuclease HII.